Consider the following 510-residue polypeptide: ATP synthase subunit alpha 1 (510 aa).

Residue 169 to 176 coordinates ATP; that stretch reads GDRQTGKT.

The protein belongs to the ATPase alpha/beta chains family. F-type ATPases have 2 components, CF(1) - the catalytic core - and CF(0) - the membrane proton channel. CF(1) has five subunits: alpha(3), beta(3), gamma(1), delta(1), epsilon(1). CF(0) has three main subunits: a(1), b(2) and c(9-12). The alpha and beta chains form an alternating ring which encloses part of the gamma chain. CF(1) is attached to CF(0) by a central stalk formed by the gamma and epsilon chains, while a peripheral stalk is formed by the delta and b chains.

The protein localises to the cell inner membrane. The enzyme catalyses ATP + H2O + 4 H(+)(in) = ADP + phosphate + 5 H(+)(out). Produces ATP from ADP in the presence of a proton gradient across the membrane. The alpha chain is a regulatory subunit. This chain is ATP synthase subunit alpha 1, found in Marinomonas sp. (strain MWYL1).